The primary structure comprises 131 residues: Profilin-2 (131 aa).

C13 and C115 are oxidised to a cystine. The Involved in PIP2 interaction signature appears at 81–97; it reads AVIRGKKGPGGVTVKKT. T111 is subject to Phosphothreonine.

The protein belongs to the profilin family. Multimer. Occurs in many kinds of cells as a complex with monomeric actin in a 1:1 ratio. Post-translationally, phosphorylated by MAP kinases.

The protein localises to the cytoplasm. The protein resides in the cytoskeleton. Functionally, binds to actin and affects the structure of the cytoskeleton. At high concentrations, profilin prevents the polymerization of actin, whereas it enhances it at low concentrations. By binding to PIP2, it inhibits the formation of IP3 and DG. The sequence is that of Profilin-2 from Hevea brasiliensis (Para rubber tree).